The sequence spans 463 residues: Cytidylate cyclase (463 aa).

One can recognise a Guanylate cyclase domain in the interval 122-231; sequence VTMFMDIIGS…IGIRIGIDLG (110 aa). F125 contributes to the a ribonucleoside 5'-triphosphate binding site. D127, I128, and D171 together coordinate Mn(2+). The AGS-C domain stretch occupies residues 334–454; the sequence is KPSRIKVVIS…VISNDTVIER (121 aa).

It belongs to the adenylyl cyclase class-4/guanylyl cyclase family. Pyrimidine cyclase subfamily. Homodimer. Requires Mn(2+) as cofactor.

Its subcellular location is the cytoplasm. The enzyme catalyses CTP = 3',5'-cyclic CMP + diphosphate. Functionally, pycsar (pyrimidine cyclase system for antiphage resistance) provides immunity against bacteriophage. The pyrimidine cyclase (PycC) synthesizes cyclic nucleotides in response to infection; these serve as specific second messenger signals. The signal activates the adjacent effector, leading to bacterial cell death and abortive phage infection. A clade E Pycsar system. Its function is as follows. The pyrimidine cyclase gene of a two-gene Pycsar system, generates cyclic CMP (cCMP) from CTP in response to bacteriophage infection. Has little to no activity on ATP, GTP or UTP. Expression of this and adjacent effector Ec303145PycTM (AC P0DV27) confers resistance to bacteriophage P1, T5, lambda-vir and phi27. The sequence is that of Cytidylate cyclase from Escherichia coli.